The chain runs to 486 residues: Adenosylhomocysteinase (486 aa).

Positions 63, 147, and 209 each coordinate substrate. Residue 210–212 participates in NAD(+) binding; the sequence is TTT. Lysine 239 and aspartate 243 together coordinate substrate. NAD(+)-binding positions include asparagine 244, 273–278, glutamate 296, asparagine 331, 352–354, and asparagine 400; these read GYGDVG and IGH.

Belongs to the adenosylhomocysteinase family. NAD(+) is required as a cofactor.

It carries out the reaction S-adenosyl-L-homocysteine + H2O = L-homocysteine + adenosine. It functions in the pathway amino-acid biosynthesis; L-homocysteine biosynthesis; L-homocysteine from S-adenosyl-L-homocysteine: step 1/1. Functionally, adenosylhomocysteine is a competitive inhibitor of S-adenosyl-L-methionine-dependent methyl transferase reactions; therefore adenosylhomocysteinase may play a key role in the control of methylations via regulation of the intracellular concentration of adenosylhomocysteine. This is Adenosylhomocysteinase from Trichomonas vaginalis.